Reading from the N-terminus, the 550-residue chain is MTKFVFVTGGVVSSLGKGIAAASLAAILESRGLKVTLLKLDPYINVDPGTMSPFQHGEVFVTEDGAETDLDLGHYERFVSAKMRKSNNFTTGQIYESVIRKERRGEYLGKTVQVIPHITNEIQAFIEKGAAASHDGKADVALVEIGGTVGDIESLPFLEAARQMSLRMGRNHCAFVHLTLVPFIASAGELKTKPTQHSVQKLREIGISPTALLCRADRPIPDDERAKISLFANIPQDAVISVWDADSIYKIPQMLNEQGLDRLICEELRLDPKPADLSMWQKLVNAQENPEHEITIGMVGKYVDLTESYKSLIEALRHAGMHTATRVNIEYIDSEELESGHLEVLAPLDAILVPGGFGKRGTEGKIRAIQYARENKIPYLGICLGMQLAVIEFARHLAGMADANSTEFNLETEHPVVALITEWVDREGKVEQRSADSDLGGTMRLGAQRVPVKEGTKARAIYGAEVNERHRHRYEVNNHYVPTLEKAGMVISARTPTENLPEMMELPESMHPWFVGVQFHPEFTSTPRDGHPLFKAYVEAALASQQRKGA.

Positions Met1–Leu270 are amidoligase domain. Position 13 (Ser13) interacts with CTP. Ser13 lines the UTP pocket. ATP contacts are provided by residues Ser14–Ile19 and Asp71. 2 residues coordinate Mg(2+): Asp71 and Glu144. CTP-binding positions include Asp151–Glu153, Lys191–Gln196, and Lys227. Residues Lys191–Gln196 and Lys227 each bind UTP. Residues Thr295–Arg547 enclose the Glutamine amidotransferase type-1 domain. Gly356 provides a ligand contact to L-glutamine. The active-site Nucleophile; for glutamine hydrolysis is the Cys383. L-glutamine is bound by residues Leu384–Gln387, Glu407, and Arg473. Residues His520 and Glu522 contribute to the active site.

It belongs to the CTP synthase family. In terms of assembly, homotetramer.

The catalysed reaction is UTP + L-glutamine + ATP + H2O = CTP + L-glutamate + ADP + phosphate + 2 H(+). It catalyses the reaction L-glutamine + H2O = L-glutamate + NH4(+). The enzyme catalyses UTP + NH4(+) + ATP = CTP + ADP + phosphate + 2 H(+). The protein operates within pyrimidine metabolism; CTP biosynthesis via de novo pathway; CTP from UDP: step 2/2. Its activity is regulated as follows. Allosterically activated by GTP, when glutamine is the substrate; GTP has no effect on the reaction when ammonia is the substrate. The allosteric effector GTP functions by stabilizing the protein conformation that binds the tetrahedral intermediate(s) formed during glutamine hydrolysis. Inhibited by the product CTP, via allosteric rather than competitive inhibition. In terms of biological role, catalyzes the ATP-dependent amination of UTP to CTP with either L-glutamine or ammonia as the source of nitrogen. Regulates intracellular CTP levels through interactions with the four ribonucleotide triphosphates. In Cupriavidus taiwanensis (strain DSM 17343 / BCRC 17206 / CCUG 44338 / CIP 107171 / LMG 19424 / R1) (Ralstonia taiwanensis (strain LMG 19424)), this protein is CTP synthase.